Consider the following 185-residue polypeptide: MGQCLRYQMQWEDLEEYQALTFLTRNEILCIHDTFLKLCPSGKHYKEATLTMDQVSSLPALRVNPFRDRICRVFSHDNVFSFEDVLGMASVFSEQACPSLKIEYAFRIYDFNENGFIDEEDLEEIVLRLLKSDDASEDLLMDVMHHVLSESDLDNDSMLSFSEFEHAMAKSPDFMNSFRIHFWGC.

EF-hand domains lie at 62-95, 97-132, and 138-174; these read RVNPFRDRICRVFSHDNVFSFEDVLGMASVFSEQ, CPSLKIEYAFRIYDFNENGFIDEEDLEEIVLRLLKS, and DLLMDVMHHVLSESDLDNDSMLSFSEFEHAMAKSPDF. Residues Asp-110, Asn-112, Asn-114, and Asp-121 each contribute to the Ca(2+) site.

Interacts with ITGA2B (via C-terminus cytoplasmic tail region); the interaction is stabilized/increased in a calcium- and magnesium-dependent manner. Expressed weakly in megakaryocytes and endothelial cells.

In Mus musculus (Mouse), this protein is Calcium and integrin-binding family member 4 (Cib4).